Reading from the N-terminus, the 409-residue chain is Isovaleryl-CoA dehydrogenase, mitochondrial (409 aa).

The N-terminal 22 residues, 1–22 (MAAAQRWLPGILRRGDGLARRL), are a transit peptide targeting the mitochondrion. FAD is bound by residues 151-160 (LAMSEPNSGS) and 184-186 (WCT). Residue serine 160 coordinates substrate. Substrate is bound by residues 206–207 (SK), tyrosine 261, and 268–271 (DLER). The active-site Proton acceptor is the glutamate 270. FAD-binding positions include arginine 296, glutamine 307, and 364 to 368 (QCLGG). 391–392 (AG) serves as a coordination point for substrate. Position 393–395 (393–395 (TSE)) interacts with FAD.

The protein belongs to the acyl-CoA dehydrogenase family. In terms of assembly, homodimer. FAD serves as cofactor.

The protein localises to the mitochondrion. It catalyses the reaction 3-methylbutanoyl-CoA + oxidized [electron-transfer flavoprotein] + H(+) = 3-methylbut-2-enoyl-CoA + reduced [electron-transfer flavoprotein]. The protein operates within amino-acid degradation; L-leucine degradation; (S)-3-hydroxy-3-methylglutaryl-CoA from 3-isovaleryl-CoA: step 1/3. This chain is Isovaleryl-CoA dehydrogenase, mitochondrial, found in Oryza sativa subsp. japonica (Rice).